We begin with the raw amino-acid sequence, 269 residues long: Tryptophan synthase alpha chain (269 aa).

Residues E49 and D60 each act as proton acceptor in the active site.

It belongs to the TrpA family. Tetramer of two alpha and two beta chains.

The catalysed reaction is (1S,2R)-1-C-(indol-3-yl)glycerol 3-phosphate + L-serine = D-glyceraldehyde 3-phosphate + L-tryptophan + H2O. It participates in amino-acid biosynthesis; L-tryptophan biosynthesis; L-tryptophan from chorismate: step 5/5. The alpha subunit is responsible for the aldol cleavage of indoleglycerol phosphate to indole and glyceraldehyde 3-phosphate. The chain is Tryptophan synthase alpha chain from Klebsiella aerogenes (Enterobacter aerogenes).